Reading from the N-terminus, the 327-residue chain is Aquaporin-1 (327 aa).

A disordered region spans residues 1-34 (MSSNDSNDTDKQHTRLDPTGVDDAYIPPEQPETK). Residues 1–48 (MSSNDSNDTDKQHTRLDPTGVDDAYIPPEQPETKHHRFKISKDTLRNH) are Cytoplasmic-facing. A helical membrane pass occupies residues 49-69 (FIAAAGEFCGTFMFLWCAYVI). Over 70 to 91 (CNVANHDVALVAAPDGSHPGQL) the chain is Extracellular. A helical membrane pass occupies residues 92 to 112 (IMIAIGFGFSVMFSIWCFAGV). Topologically, residues 113 to 136 (SGGALNPAVSLSLCLARAVSPTRC) are cytoplasmic. The NPA 1 signature appears at 118–120 (NPA). The chain crosses the membrane as a helical span at residues 137 to 157 (VVMWVSQIVAGMAAGGAASAM). The Extracellular segment spans residues 158 to 176 (TPGEVLFANSLGLGCSRTR). A helical transmembrane segment spans residues 177–197 (GLFLEMFGTAILCLTVLMTAV). Residues 198-203 (EKRETN) are Cytoplasmic-facing. The chain crosses the membrane as a helical span at residues 204-224 (FMAALPIGISLFIAHVALTAY). At 225 to 248 (TGTGVNPARSLGAAVAARYFPHYH) the chain is on the extracellular side. Positions 230-232 (NPA) match the NPA 2 motif. A helical membrane pass occupies residues 249 to 269 (WIYWIGPLLGSILAWSVWQLL). Topologically, residues 270 to 327 (QILDYTTYVTAEKAASTKEKAQKKVKPAVPLLWLKSNFSLLFFISRSLALNVIIFGKN) are cytoplasmic.

Belongs to the MIP/aquaporin (TC 1.A.8) family.

It is found in the endoplasmic reticulum membrane. It localises to the cell membrane. In terms of biological role, water channel required to facilitate the transport of water across membranes. Involved in sporulation, freeze tolerance and osmotolerance. Is non-functional in most laboratory strains. This Saccharomyces cerevisiae (strain Lalvin EC1118 / Prise de mousse) (Baker's yeast) protein is Aquaporin-1 (AQY1).